The sequence spans 729 residues: MTEITAEGNASTTTTVIDSKNGSVPKSPGKVLKRTVTEDIVTTFSSPAAWLLVIALIITWSAVAIVMFDLVDYKNFSASSIAKIGSDPLKLVRDAMEETTDWIYGFFSLLSDIISSEDEEDDDGDEDTDKGEIDEPPLRKKEIHKDKTEKQEKPERKIQTKVTHKEKEKGKEKVREKEKPEKKATHKEKIEKKEKPETKTLAKEQKKAKTAEKSEEKTKKEVKGGKQEKVKQTAAKVKEVQKTPSKPKEKEDKEKAAVSKHEQKDQYAFCRYMIDIFVHGDLKPGQSPAIPPPLPTEQASRPTPASPALEEKEGEKKKAEKKVTSETKKKEKEDIKKKSEKETAIDVEKKEPGKASETKQGTVKIAAQAAAKKDEKKEDSKKTKKPAEVEQPKGKKQEKKEKHVEPAKSPKKEHSVPSDKQVKAKTERAKEEIGAVSIKKAVPGKKEEKTTKTVEQEIRKEKSGKTSSILKDKEPIKGKEEKVPASLKEKEPETKKDEKMSKAGKEVKPKPPQLQGKKEEKPEPQIKKEAKPAISEKVQIHKQDIVKPEKTVSHGKPEEKVLKQVKAVTIEKTAKPKPTKKAEHREREPPSIKTDKPKPTPKGTSEVTESGKKKTEISEKESKEKADMKHLREEKVSTRKESLQLHNVTKAEKPARVSKDVEDVPASKKAKEGTEDVSPTKQKSPISFFQCVYLDGYNGYGFQFPFTPADRPGESSGQANSPGQKQQGQ.

Residues 1–28 (MTEITAEGNASTTTTVIDSKNGSVPKSP) form a disordered region. Topologically, residues 1–47 (MTEITAEGNASTTTTVIDSKNGSVPKSPGKVLKRTVTEDIVTTFSSP) are cytoplasmic. The segment covering 8–24 (GNASTTTTVIDSKNGSV) has biased composition (polar residues). The helical transmembrane segment at 48 to 68 (AAWLLVIALIITWSAVAIVMF) threads the bilayer. Over 69–729 (DLVDYKNFSA…NSPGQKQQGQ (661 aa)) the chain is Lumenal. Residue N75 is glycosylated (N-linked (GlcNAc...) asparagine). Over residues 117 to 129 (EDEEDDDGDEDTD) the composition is skewed to acidic residues. Disordered stretches follow at residues 117–265 (EDEE…EQKD), 281–682 (DLKP…PTKQ), and 705–729 (PFTP…QQGQ). Basic and acidic residues-rich tracts occupy residues 130–265 (KGEI…EQKD), 309–357 (LEEK…KASE), 371–433 (AKKD…KEEI), 444–509 (GKKE…EVKP), 516–531 (GKKE…KEAK), 538–562 (VQIH…EKVL), 580–598 (KKAE…DKPK), and 609–674 (ESGK…KEGT). An N-linked (GlcNAc...) asparagine glycan is attached at N647. Residues 715–729 (SSGQANSPGQKQQGQ) are compositionally biased toward polar residues.

Homooligomer of variable subunit number; disulfide-linked. Interacts with CASQ1 and RYR1 in skeletal muscle. Interacts with CASQ2. Phosphorylated by CaMK2. Post-translationally, N-glycosylated.

Its subcellular location is the cell membrane. It is found in the sarcoplasmic reticulum membrane. Its function is as follows. Contributes to the regulation of lumenal Ca2+ release via the sarcoplasmic reticulum calcium release channels RYR1 and RYR2, a key step in triggering skeletal and heart muscle contraction. Required for normal organization of the triad junction, where T-tubules and the sarcoplasmic reticulum terminal cisternae are in close contact. Required for normal skeletal muscle strength. Plays a role in excitation-contraction coupling in the heart and in regulating the rate of heart beats. The sequence is that of Triadin (TRDN) from Homo sapiens (Human).